The chain runs to 65 residues: Toxin KTx8 (65 aa).

The signal sequence occupies residues 1 to 25 (MNKVCFVVVLVLFVALAAYVSPIEG). 3 disulfides stabilise this stretch: Cys31/Cys53, Cys38/Cys61, and Cys42/Cys63.

This sequence belongs to the short scorpion toxin superfamily. Potassium channel inhibitor family. Alpha-KTx 11 subfamily. Expressed by the venom gland.

The protein localises to the secreted. Functionally, this recombinant toxin inhibits the mammalian voltage-gated potassium channels Kv1.3/KCNA3 in vitro with an IC(50) of 26.40 nM. In Lychas mucronatus (Chinese swimming scorpion), this protein is Toxin KTx8.